Consider the following 777-residue polypeptide: MNRIASYLRTYATEAERPMATDVQPSESDVERLLRQRNVGISAHIDSGKTTLTERVLYYTGRIKDIHEVRGRDEVGAKMDSMELEREKGITIQSAATYCNWKATPPTERSNMTGDAADESTVTTQKKHDYHINIIDTPGHVDFTIEVERALRVLDGAVLVLCAVSGVQSQTMTVDRQMRRYSVPRLSFINKMDRAGANPWRVVEQIRTKLRMPAAAMQVPIGAEDNFQGLVDLVRWKAVYNEGTKGNVVRESDDIPADVLELAREKRQELIEQLSDVDDEMAEIFIEEREPTIEELVAALRRATVACRFSPVFLGTAIKNKGVQALLDGMCAYLPNPMEVRAIANDTAVAKKIAAQANEEGHDVAAMQSSAQHGSEVQLVPATEAPLVGLAFKLEESRFGQLTYMRVYQGILRRGGIIFNSRTGKKVKVPRLVRMHADDMEDVQEIGPGEICAMFGVECSSGDTFTDGSTTLSMSAMFVPEPVISLSLTPEGKDTSVNFSRALNRFQKEDPTFRVHVDSESSETIISGMGELHLDIYVERMRREYNVPCTTGKPRVAFRETISQPAKFNYTHKKQTGGAGQFGRVIGYIEPMTVDEDTGKDTAFVNSVMGGNIPPSYIPACEKGFADGLEKGALAGYPVCGVRMVLEDGAAHSVDSSELAFRIAAHAAFREAFRAANPTILEPKMSVEVIAPVEFQGTVIGALNQRKGTIEDTEVREDDFTITAEVSLNDMFGFSSQLRGLTQGKGEFSMEYKKHEPVMPNVQADMEAAYKKSLEKK.

In terms of domain architecture, tr-type G spans 34–338 (LRQRNVGISA…GMCAYLPNPM (305 aa)). GTP contacts are provided by residues 43-50 (AHIDSGKT), 136-140 (DTPGH), and 190-193 (NKMD).

The protein belongs to the TRAFAC class translation factor GTPase superfamily. Classic translation factor GTPase family. EF-G/EF-2 subfamily.

It localises to the mitochondrion. It participates in protein biosynthesis; polypeptide chain elongation. Its function is as follows. Mitochondrial GTPase that catalyzes the GTP-dependent ribosomal translocation step during translation elongation. During this step, the ribosome changes from the pre-translocational (PRE) to the post-translocational (POST) state as the newly formed A-site-bound peptidyl-tRNA and P-site-bound deacylated tRNA move to the P and E sites, respectively. Catalyzes the coordinated movement of the two tRNA molecules, the mRNA and conformational changes in the ribosome. The polypeptide is Elongation factor G, mitochondrial (Malassezia globosa (strain ATCC MYA-4612 / CBS 7966) (Dandruff-associated fungus)).